The primary structure comprises 5005 residues: Bridge-like lipid transfer protein family member 1 (5005 aa).

A helical membrane pass occupies residues 27-47 (VVWLLVATILSCGWIIYLTYY). 2 disordered regions span residues 692 to 718 (RPAQ…PSEL) and 1205 to 1314 (KSVG…ASVC). The span at 708 to 718 (SPRPPVDPSEL) shows a compositional bias: pro residues. The segment covering 1205–1215 (KSVGIEGERKT) has biased composition (basic and acidic residues). Residues 1226–1240 (SHSSSSSSEENSSSS) are compositionally biased toward low complexity. The segment covering 1248–1275 (GEKESPSSAADDHSVQKDLLHSARRDDG) has biased composition (basic and acidic residues). Positions 1278–1303 (SVPTEISGTSPVSPNTQDKSVGQSPL) are enriched in polar residues. A phosphoserine mark is found at Ser1301, Ser1305, and Ser1323. At Thr1325 the chain carries Phosphothreonine. Disordered stretches follow at residues 1343-1376 (SDVS…SNSF), 1399-1425 (EEFE…QMQQ), 1521-1544 (TNKR…SEES), and 1676-1698 (FSEN…MIGT). Phosphoserine is present on residues Ser1355 and Ser1406. The span at 1521–1530 (TNKRTSKSSL) shows a compositional bias: basic residues. The span at 1684–1693 (QDIRGTKTEH) shows a compositional bias: basic and acidic residues. Residues Ser1805 and Ser1808 each carry the phosphoserine modification. 6 disordered regions span residues 1927–1991 (RGGV…PLMP), 2165–2192 (PAQP…GGLQ), 2265–2288 (TSGD…KESP), 2367–2387 (ESPV…PNLP), 2400–2420 (SSDQ…QDDV), and 2598–2677 (TAGS…KDVV). Polar residues-rich tracts occupy residues 1931 to 1948 (LTSN…YNTD) and 1959 to 1971 (TSPS…NSVS). 3 stretches are compositionally biased toward polar residues: residues 2367-2379 (ESPV…NSLP), 2400-2418 (SSDQ…TSQD), and 2598-2608 (TAGSASPTPTF). Phosphoserine occurs at positions 2601 and 2603. The span at 2619–2638 (SDFSRSSRGSLNGGNRVNNA) shows a compositional bias: low complexity. Residues 2643–2665 (ANNENNKKESRNKNSLGRSERRT) are compositionally biased toward basic and acidic residues. Ser2755 carries the phosphoserine modification. The tract at residues 2928-2967 (RQPSTAPQPMKEDIATPLPSEKTPTSVNQTPIETNEFPQL) is disordered. The segment covering 2949 to 2964 (KTPTSVNQTPIETNEF) has biased composition (polar residues). 3 positions are modified to phosphoserine: Ser3562, Glu3577, and Ser3653. Disordered stretches follow at residues 3614 to 3662 (YSRS…TFNI), 3686 to 3744 (SSNS…ERFY), 3821 to 3843 (RRSY…KKFQ), 3935 to 3954 (KTNT…KGKG), 4089 to 4145 (TTYP…SSSS), and 4325 to 4396 (QSAS…ASQQ). Residues 3686 to 3711 (SSNSEGSCSVFSSPKTTGGFSPSVPF) show a composition bias toward polar residues. Acidic residues predominate over residues 3727 to 3736 (EDSEKDEKDE). Residues 3821-3837 (RRSYDRSSRSLDQDSPS) show a composition bias toward basic and acidic residues. Residues 4097–4112 (SPGSNAPQTGAKTSAS) show a composition bias toward polar residues. Residues 4117–4145 (PGSSGLGSPLGRSRHSSSQSDLTGSSSSS) show a composition bias toward low complexity. Ser4124 carries the post-translational modification Phosphoserine. A compositionally biased stretch (polar residues) spans 4325–4358 (QSASFTHMPQSPNVFNEHMTNNTMSPGTAAQSLK). Positions 4359 to 4372 (SPASIRSRSVSDSS) are enriched in low complexity. A compositionally biased stretch (polar residues) spans 4381 to 4396 (KTSTPVNKSNKAASQQ).

As to expression, highly expressed in testis and ovary. Weakly or not expressed in other tissues.

Its subcellular location is the cell membrane. The protein resides in the endoplasmic reticulum membrane. It is found in the mitochondrion membrane. In terms of biological role, tube-forming lipid transport protein which provides phosphatidylethanolamine for glycosylphosphatidylinositol (GPI) anchor synthesis in the endoplasmic reticulum. Plays a role in endosomal trafficking and endosome recycling. Also involved in the actin cytoskeleton and cilia structural dynamics. Acts as a regulator of phagocytosis. The protein is Bridge-like lipid transfer protein family member 1 (Bltp1) of Mus musculus (Mouse).